Reading from the N-terminus, the 197-residue chain is Orotate phosphoribosyltransferase (197 aa).

5-phospho-alpha-D-ribose 1-diphosphate contacts are provided by residues R87, K91, H93, and 112-120 (DDVATTGGS). Orotate is bound by residues T116 and R144.

This sequence belongs to the purine/pyrimidine phosphoribosyltransferase family. PyrE subfamily. Homodimer. It depends on Mg(2+) as a cofactor.

It carries out the reaction orotidine 5'-phosphate + diphosphate = orotate + 5-phospho-alpha-D-ribose 1-diphosphate. The protein operates within pyrimidine metabolism; UMP biosynthesis via de novo pathway; UMP from orotate: step 1/2. Catalyzes the transfer of a ribosyl phosphate group from 5-phosphoribose 1-diphosphate to orotate, leading to the formation of orotidine monophosphate (OMP). The chain is Orotate phosphoribosyltransferase from Sulfolobus acidocaldarius (strain ATCC 33909 / DSM 639 / JCM 8929 / NBRC 15157 / NCIMB 11770).